Reading from the N-terminus, the 512-residue chain is Mesoderm induction early response protein 1 (512 aa).

The segment covering 1–16 (MAEPSVESSSPGGSAT) has biased composition (low complexity). 2 disordered regions span residues 1 to 63 (MAEP…REGD) and 75 to 173 (YGST…EDYI). Residue Ser10 is modified to Phosphoserine. The segment covering 17 to 36 (SDDHEFDPSADMLVHDFDDE) has biased composition (basic and acidic residues). Acidic residues-rich tracts occupy residues 37–46 (RTLEEEEMME) and 83–105 (EEDE…DNDD). The segment covering 129-144 (QSSNDDPSQSVASQDA) has biased composition (polar residues). Residue Ser141 is modified to Phosphoserine. Position 155 is a phosphotyrosine (Tyr155). Phosphoserine is present on residues Ser160 and Ser166. Residues 160–173 (SEVEEESEEDEDYI) show a composition bias toward acidic residues. One can recognise an ELM2 domain in the interval 180–278 (KEIMVGSMFQ…EALRRLRFNV (99 aa)). An interaction with HDAC1 region spans residues 180-284 (KEIMVGSMFQ…RFNVKAAREE (105 aa)). Residue Lys239 forms a Glycyl lysine isopeptide (Lys-Gly) (interchain with G-Cter in SUMO2) linkage. In terms of domain architecture, SANT spans 283–335 (EELSVWTEEECRNFEQGLKAYGKDFHLIQANKVRTRSVGECVAFYYMWKKSER). A disordered region spans residues 366–512 (ESESAASSRA…KFEELENTDD (147 aa)). A phosphoserine mark is found at Ser367, Ser369, and Ser377. Residues 396–409 (TVSTANQNGVSSNG) are compositionally biased toward polar residues. The span at 414 to 423 (LNKEEVKVEG) shows a compositional bias: basic and acidic residues. A Glycyl lysine isopeptide (Lys-Gly) (interchain with G-Cter in SUMO2) cross-link involves residue Lys420. Thr448 carries the post-translational modification Phosphothreonine. Residues 462–475 (ARNENDFDEKSERP) show a composition bias toward basic and acidic residues. Polar residues predominate over residues 482 to 494 (NSNGKESPGSSEF). A phosphoserine mark is found at Ser483, Ser488, and Ser491.

As to quaternary structure, interacts with HDAC1. Part of a complex containing at least CDYL, MIER1, MIER2, HDAC1 and HDAC2. Ubiquitously expressed, but at very low levels. However, consistent level of expression are observed in heart, testis, thyroid, ovary and adrenal gland. Transcripts are up-regulated in breast carcinoma cell lines and tumor.

It is found in the nucleus. The protein localises to the cytoplasm. Functionally, transcriptional repressor regulating the expression of a number of genes including SP1 target genes. Probably functions through recruitment of HDAC1 a histone deacetylase involved in chromatin silencing. The sequence is that of Mesoderm induction early response protein 1 (MIER1) from Homo sapiens (Human).